A 315-amino-acid chain; its full sequence is 31 kDa ribonucleoprotein, chloroplastic (315 aa).

Residues 1–71 (MSCATKPIIK…LSPKKKTSVS (71 aa)) constitute a chloroplast transit peptide. Residues 114 to 133 (AGESDEVEADEEEEEFQEPP) are disordered. The span at 115-133 (GESDEVEADEEEEEFQEPP) shows a compositional bias: acidic residues. RRM domains are found at residues 136–214 (AKLF…KAAR) and 230–308 (YRIY…VAED).

It localises to the plastid. It is found in the chloroplast. In terms of biological role, could be involved in splicing and/or processing of chloroplast RNA's. The chain is 31 kDa ribonucleoprotein, chloroplastic from Nicotiana sylvestris (Wood tobacco).